Consider the following 67-residue polypeptide: ATP synthase F(0) complex subunit 8 (67 aa).

Residues 8–24 (TWFTTILATITTLFILF) traverse the membrane as a helical segment. The residue at position 54 (Lys-54) is an N6-acetyllysine; alternate. Lys-54 carries the post-translational modification N6-succinyllysine; alternate. The residue at position 57 (Lys-57) is an N6-acetyllysine.

This sequence belongs to the ATPase protein 8 family. As to quaternary structure, component of the ATP synthase complex composed at least of ATP5F1A/subunit alpha, ATP5F1B/subunit beta, ATP5MC1/subunit c (homooctomer), MT-ATP6/subunit a, MT-ATP8/subunit 8, ATP5ME/subunit e, ATP5MF/subunit f, ATP5MG/subunit g, ATP5MK/subunit k, ATP5MJ/subunit j, ATP5F1C/subunit gamma, ATP5F1D/subunit delta, ATP5F1E/subunit epsilon, ATP5PF/subunit F6, ATP5PB/subunit b, ATP5PD/subunit d, ATP5PO/subunit OSCP. ATP synthase complex consists of a soluble F(1) head domain (subunits alpha(3) and beta(3)) - the catalytic core - and a membrane F(0) domain - the membrane proton channel (subunits c, a, 8, e, f, g, k and j). These two domains are linked by a central stalk (subunits gamma, delta, and epsilon) rotating inside the F1 region and a stationary peripheral stalk (subunits F6, b, d, and OSCP). Interacts with PRICKLE3.

It is found in the mitochondrion membrane. Functionally, subunit 8, of the mitochondrial membrane ATP synthase complex (F(1)F(0) ATP synthase or Complex V) that produces ATP from ADP in the presence of a proton gradient across the membrane which is generated by electron transport complexes of the respiratory chain. ATP synthase complex consist of a soluble F(1) head domain - the catalytic core - and a membrane F(1) domain - the membrane proton channel. These two domains are linked by a central stalk rotating inside the F(1) region and a stationary peripheral stalk. During catalysis, ATP synthesis in the catalytic domain of F(1) is coupled via a rotary mechanism of the central stalk subunits to proton translocation. In vivo, can only synthesize ATP although its ATP hydrolase activity can be activated artificially in vitro. Part of the complex F(0) domain. The sequence is that of ATP synthase F(0) complex subunit 8 from Talpa europaea (European mole).